The following is a 110-amino-acid chain: Holo-[acyl-carrier-protein] synthase (110 aa).

2 residues coordinate Mg(2+): Asp-8 and Glu-54.

Belongs to the P-Pant transferase superfamily. AcpS family. Mg(2+) is required as a cofactor.

It is found in the cytoplasm. It carries out the reaction apo-[ACP] + CoA = holo-[ACP] + adenosine 3',5'-bisphosphate + H(+). Functionally, transfers the 4'-phosphopantetheine moiety from coenzyme A to a Ser of acyl-carrier-protein. The polypeptide is Holo-[acyl-carrier-protein] synthase (Mycoplasma mycoides subsp. mycoides SC (strain CCUG 32753 / NCTC 10114 / PG1)).